The sequence spans 234 residues: Covalently-linked cell wall protein 14 (234 aa).

An N-terminal signal peptide occupies residues 1–22; sequence MASFLKISTLIAIVSTLQTTLA. The 87-residue stretch at 23–109 folds into the CFEM domain; that stretch reads APPACLLACV…SSEESSASAS (87 aa). Cystine bridges form between Cys-27-Cys-66, Cys-31-Cys-61, Cys-41-Cys-49, and Cys-51-Cys-82. Asp-46 serves as a coordination point for heme. The segment covering 86 to 207 has biased composition (low complexity); the sequence is SSQSSSSESE…ASSSESTTAT (122 aa). The tract at residues 86 to 208 is disordered; that stretch reads SSQSSSSESE…SSSESTTATG (123 aa). A lipid anchor (GPI-anchor amidated glycine) is attached at Gly-215. Positions 216–234 are cleaved as a propeptide — removed in mature form; that stretch reads SAAKVGLGALVGLVGAVLL.

This sequence belongs to the CCW14 family. Post-translationally, the GPI-anchor is attached to the protein in the endoplasmic reticulum and serves to target the protein to the cell surface. There, the glucosamine-inositol phospholipid moiety is cleaved off and the GPI-modified mannoprotein is covalently attached via its lipidless GPI glycan remnant to the 1,6-beta-glucan of the outer cell wall layer.

The protein resides in the secreted. Its subcellular location is the cell wall. The protein localises to the membrane. Beta-glucan associated cell wall protein involved in cell wall structure. May serve as cross-linking or coat-forming wall protein. This chain is Covalently-linked cell wall protein 14 (SSR1), found in Candida albicans (strain SC5314 / ATCC MYA-2876) (Yeast).